Consider the following 119-residue polypeptide: Parathyroid hormone (119 aa).

The N-terminal stretch at 1–25 is a signal peptide; that stretch reads MTSTKNLAKAIVILYAICFFTNSDG. Positions 26-31 are excised as a propeptide; sequence RPMMKR.

The protein belongs to the parathyroid hormone family. As to quaternary structure, interacts with PTH1R (via N-terminal extracellular domain).

It is found in the secreted. Functionally, parathyroid hormone elevates calcium level by dissolving the salts in bone and preventing their renal excretion. Acts by binding to its receptor, PTH1R, activating G protein-coupled receptor signaling. Stimulates [1-14C]-2-deoxy-D-glucose (2DG) transport and glycogen synthesis in osteoblastic cells. This is Parathyroid hormone from Gallus gallus (Chicken).